We begin with the raw amino-acid sequence, 465 residues long: Poly(A) polymerase I (465 aa).

Residues D80, D82, and D162 contribute to the active site. Residues 429–465 (SAPPDQKGMLNELDEEPSPRRRTRRPRKRAPRREGTA) are disordered. Positions 448–459 (RRRTRRPRKRAP) are enriched in basic residues.

It belongs to the tRNA nucleotidyltransferase/poly(A) polymerase family.

The catalysed reaction is RNA(n) + ATP = RNA(n)-3'-adenine ribonucleotide + diphosphate. In terms of biological role, adds poly(A) tail to the 3' end of many RNAs, which usually targets these RNAs for decay. Plays a significant role in the global control of gene expression, through influencing the rate of transcript degradation, and in the general RNA quality control. The polypeptide is Poly(A) polymerase I (Escherichia coli O157:H7).